The primary structure comprises 160 residues: Variant surface antigen C (160 aa).

The signal sequence occupies residues 1 to 29 (MKKSIFSKKLLVSFGSLVALASIPLIAIS). A lipid anchor (N-palmitoyl cysteine) is attached at Cys30. Cys30 carries S-diacylglycerol cysteine lipidation. The interval 32-160 (QTNTDKSQQP…SSESGSQKTT (129 aa)) is disordered. 2 stretches are compositionally biased toward low complexity: residues 38–54 (SQQPGSGSSTSGDQSGT) and 62–87 (SGTSTSGGQSGTTSGSGTTTGEQTET). Repeat copies occupy residues 86-97 (ETAPKSPESGSQ), 98-109 (EATPKSPESGSQ), 110-121 (EATPKSPESGSQ), 122-133 (EAAPKSSESGSQ), 134-145 (EAAPKSSESGSQ), and 146-157 (EAAPKSSESGSQ). Residues 86 to 157 (ETAPKSPESG…APKSSESGSQ (72 aa)) are 6 X 12 AA tandem repeats. Positions 93–160 (ESGSQEATPK…SSESGSQKTT (68 aa)) are enriched in polar residues.

Its subcellular location is the cell membrane. In terms of biological role, responsible for the antigenic diversity for host adaptation. This Mesomycoplasma hyorhinis (Mycoplasma hyorhinis) protein is Variant surface antigen C (vlpC).